The following is a 316-amino-acid chain: Lipoyl synthase (316 aa).

Residues 1-15 (MKARNESMSKGEYKT) are compositionally biased toward basic and acidic residues. The disordered stretch occupies residues 1 to 33 (MKARNESMSKGEYKTKSLKNRPDPTQPKLKKPS). [4Fe-4S] cluster contacts are provided by C64, C69, C75, C90, C94, C97, and S304. Residues 76 to 293 (FGHGTATFMI…EQAGMEMGFT (218 aa)) enclose the Radical SAM core domain.

This sequence belongs to the radical SAM superfamily. Lipoyl synthase family. The cofactor is [4Fe-4S] cluster.

The protein resides in the cytoplasm. It catalyses the reaction [[Fe-S] cluster scaffold protein carrying a second [4Fe-4S](2+) cluster] + N(6)-octanoyl-L-lysyl-[protein] + 2 oxidized [2Fe-2S]-[ferredoxin] + 2 S-adenosyl-L-methionine + 4 H(+) = [[Fe-S] cluster scaffold protein] + N(6)-[(R)-dihydrolipoyl]-L-lysyl-[protein] + 4 Fe(3+) + 2 hydrogen sulfide + 2 5'-deoxyadenosine + 2 L-methionine + 2 reduced [2Fe-2S]-[ferredoxin]. It participates in protein modification; protein lipoylation via endogenous pathway; protein N(6)-(lipoyl)lysine from octanoyl-[acyl-carrier-protein]: step 2/2. Its function is as follows. Catalyzes the radical-mediated insertion of two sulfur atoms into the C-6 and C-8 positions of the octanoyl moiety bound to the lipoyl domains of lipoate-dependent enzymes, thereby converting the octanoylated domains into lipoylated derivatives. The chain is Lipoyl synthase from Hydrogenovibrio crunogenus (strain DSM 25203 / XCL-2) (Thiomicrospira crunogena).